We begin with the raw amino-acid sequence, 330 residues long: Aspartate--ammonia ligase (330 aa).

Belongs to the class-II aminoacyl-tRNA synthetase family. AsnA subfamily.

Its subcellular location is the cytoplasm. It catalyses the reaction L-aspartate + NH4(+) + ATP = L-asparagine + AMP + diphosphate + H(+). It functions in the pathway amino-acid biosynthesis; L-asparagine biosynthesis; L-asparagine from L-aspartate (ammonia route): step 1/1. This Streptococcus pyogenes serotype M49 (strain NZ131) protein is Aspartate--ammonia ligase.